The primary structure comprises 76 residues: Protein sigN132 (76 aa).

The segment covering 1–13 has biased composition (polar residues); it reads MLFESISTLSNLK. The segment at 1 to 33 is disordered; the sequence is MLFESISTLSNLKSASKSSMIASTGSTSSKSSN. The segment covering 14-33 has biased composition (low complexity); that stretch reads SASKSSMIASTGSTSSKSSN.

The polypeptide is Protein sigN132 (Dictyostelium discoideum (Social amoeba)).